Consider the following 207-residue polypeptide: Small ribosomal subunit protein uS4c (207 aa).

Residues 92–155 form the S4 RNA-binding domain; the sequence is MRLDNILFRL…TYQSILSKRI (64 aa).

This sequence belongs to the universal ribosomal protein uS4 family. In terms of assembly, part of the 30S ribosomal subunit. Contacts protein S5. The interaction surface between S4 and S5 is involved in control of translational fidelity.

It is found in the plastid. Its subcellular location is the chloroplast. In terms of biological role, one of the primary rRNA binding proteins, it binds directly to 16S rRNA where it nucleates assembly of the body of the 30S subunit. Its function is as follows. With S5 and S12 plays an important role in translational accuracy. This is Small ribosomal subunit protein uS4c (rps4) from Equisetum giganteum (Giant horsetail).